The sequence spans 466 residues: Methylenetetrahydrofolate--tRNA-(uracil-5-)-methyltransferase TrmFO (466 aa).

14 to 19 is a binding site for FAD; that stretch reads GGGLAG.

It belongs to the MnmG family. TrmFO subfamily. FAD is required as a cofactor.

Its subcellular location is the cytoplasm. The enzyme catalyses uridine(54) in tRNA + (6R)-5,10-methylene-5,6,7,8-tetrahydrofolate + NADH + H(+) = 5-methyluridine(54) in tRNA + (6S)-5,6,7,8-tetrahydrofolate + NAD(+). It catalyses the reaction uridine(54) in tRNA + (6R)-5,10-methylene-5,6,7,8-tetrahydrofolate + NADPH + H(+) = 5-methyluridine(54) in tRNA + (6S)-5,6,7,8-tetrahydrofolate + NADP(+). Its function is as follows. Catalyzes the folate-dependent formation of 5-methyl-uridine at position 54 (M-5-U54) in all tRNAs. This is Methylenetetrahydrofolate--tRNA-(uracil-5-)-methyltransferase TrmFO from Brucella melitensis biotype 1 (strain ATCC 23456 / CCUG 17765 / NCTC 10094 / 16M).